Consider the following 614-residue polypeptide: Zinc metalloproteinase-disintegrin-like Eoc1 (614 aa).

The N-terminal stretch at methionine 1–serine 19 is a signal peptide. A propeptide spanning residues isoleucine 20–glutamate 193 is cleaved from the precursor. Glutamine 194 is modified (pyrrolidone carboxylic acid). The Peptidase M12B domain maps to lysine 202–proline 398. The N-linked (GlcNAc...) asparagine glycan is linked to asparagine 268. Cystine bridges form between cysteine 313/cysteine 393, cysteine 353/cysteine 377, and cysteine 355/cysteine 360. Position 338 (histidine 338) interacts with Zn(2+). Glutamate 339 is an active-site residue. Residues histidine 342 and histidine 348 each contribute to the Zn(2+) site. N-linked (GlcNAc...) asparagine glycosylation is present at asparagine 376. The 87-residue stretch at proline 406–asparagine 492 folds into the Disintegrin domain. Valine 408, asparagine 411, leucine 413, glutamate 415, glutamate 418, and aspartate 421 together coordinate Ca(2+). Intrachain disulfides connect cysteine 409-cysteine 438, cysteine 420-cysteine 433, cysteine 422-cysteine 428, cysteine 432-cysteine 455, cysteine 446-cysteine 452, cysteine 451-cysteine 477, cysteine 464-cysteine 484, cysteine 471-cysteine 503, cysteine 496-cysteine 508, cysteine 515-cysteine 565, cysteine 530-cysteine 576, cysteine 543-cysteine 553, cysteine 560-cysteine 602, and cysteine 596-cysteine 607. Positions glutamate 470–aspartate 472 match the D/ECD-tripeptide motif. N-linked (GlcNAc...) asparagine glycosylation occurs at asparagine 498.

The protein belongs to the venom metalloproteinase (M12B) family. P-III subfamily. P-IIIc sub-subfamily. In terms of assembly, heterodimer; disulfide-linked. Zn(2+) is required as a cofactor. In terms of tissue distribution, expressed by the venom gland.

It localises to the secreted. Functionally, this metalloproteinase hydrolyzes azocasein, and oxidized insulin B-chain. Also hydrolyzes the alpha-chain (FGA) and more slowly the beta-chain of fibrinogen (FGB), without affecting the gamma-chain. Does not cleave fibrin. Inhibits endothelial cell adhesion to extracellular matrix proteins such as fibrinogen, fibronectin, vitronectin, collagen I, and collagen IV. Induces apoptosis in vascular endothelial cells. The sequence is that of Zinc metalloproteinase-disintegrin-like Eoc1 (Svmp3-Eoc1) from Echis ocellatus (Ocellated saw-scaled viper).